Here is a 397-residue protein sequence, read N- to C-terminus: Ribosomal RNA large subunit methyltransferase I (397 aa).

Residues 2 to 80 (SAAIYLVKGR…QDINRAFFVK (79 aa)) form the PUA domain.

This sequence belongs to the methyltransferase superfamily. RlmI family.

The protein resides in the cytoplasm. It catalyses the reaction cytidine(1962) in 23S rRNA + S-adenosyl-L-methionine = 5-methylcytidine(1962) in 23S rRNA + S-adenosyl-L-homocysteine + H(+). Specifically methylates the cytosine at position 1962 (m5C1962) of 23S rRNA. This chain is Ribosomal RNA large subunit methyltransferase I, found in Vibrio vulnificus (strain CMCP6).